The sequence spans 91 residues: Small ribosomal subunit protein uS19 (91 aa).

Belongs to the universal ribosomal protein uS19 family.

Protein S19 forms a complex with S13 that binds strongly to the 16S ribosomal RNA. In Lactiplantibacillus plantarum (strain ATCC BAA-793 / NCIMB 8826 / WCFS1) (Lactobacillus plantarum), this protein is Small ribosomal subunit protein uS19.